The sequence spans 141 residues: Large ribosomal subunit protein bL17 (141 aa).

This sequence belongs to the bacterial ribosomal protein bL17 family. Part of the 50S ribosomal subunit. Contacts protein L32.

The chain is Large ribosomal subunit protein bL17 from Chlamydia trachomatis serovar D (strain ATCC VR-885 / DSM 19411 / UW-3/Cx).